A 199-amino-acid polypeptide reads, in one-letter code: MILFYVFVVLALVSGAMVIRAKNPVHSVLFLILVFCNTSGLLVLLGLDFFAMIFLVVYVGAIAVLFLFVVMMLHIRIEEIHENVLRYLPVGGIIGLIFLLEIFLMVDNDYIPILPTKLSATYLTYTVYAGKIHSWTNLETLGNLLYTTYFFLFLVSSLILLVALIGAIVLTMHKTTKVKRQDVFIQNAIDFQNTIKKVR.

The next 5 helical transmembrane spans lie at 1-21, 27-47, 49-69, 87-107, and 150-170; these read MILFYVFVVLALVSGAMVIRA, SVLFLILVFCNTSGLLVLLGL, FFAMIFLVVYVGAIAVLFLFV, YLPVGGIIGLIFLLEIFLMVD, and FFLFLVSSLILLVALIGAIVL.

The protein belongs to the complex I subunit 6 family.

The protein localises to the mitochondrion membrane. The catalysed reaction is a ubiquinone + NADH + 5 H(+)(in) = a ubiquinol + NAD(+) + 4 H(+)(out). Core subunit of the mitochondrial membrane respiratory chain NADH dehydrogenase (Complex I) that is believed to belong to the minimal assembly required for catalysis. Complex I functions in the transfer of electrons from NADH to the respiratory chain. The immediate electron acceptor for the enzyme is believed to be ubiquinone. This chain is NADH-ubiquinone oxidoreductase chain 6 (ND6), found in Marchantia polymorpha (Common liverwort).